Consider the following 523-residue polypeptide: Cilia- and flagella-associated protein 157 (523 aa).

Positions 1 to 31 are disordered; it reads MAPKKKPNKGGKEMQGKKIGGKKDASGTKTP. Over residues 10–26 the composition is skewed to basic and acidic residues; it reads GGKEMQGKKIGGKKDAS. T30 is subject to Phosphothreonine. Coiled coils occupy residues 32–191, 248–274, and 302–371; these read ELAM…LEKK, VQLLQENEQLKGTQNKLCQQLEMLENT, and GTEE…VLIQ. The disordered stretch occupies residues 419-440; that stretch reads QPDMGSHQDKQPQGLSKESQRI. The span at 429–440 shows a compositional bias: polar residues; the sequence is QPQGLSKESQRI.

Belongs to the CFAP157 family. In terms of assembly, interacts with TUBB and TUBA4A. Interacts with CEP350. In terms of tissue distribution, specifically expressed in tissues containing motile cilia.

The protein localises to the cytoplasm. It localises to the cytoskeleton. It is found in the cilium basal body. In terms of biological role, specifically required during spermatogenesis for flagellum morphogenesis and sperm motility. May be required to suppress the formation of supernumerary axonemes and ensure a correct ultrastructure. The protein is Cilia- and flagella-associated protein 157 of Mus musculus (Mouse).